Consider the following 138-residue polypeptide: Acidic phospholipase A2 DsM-a2/DsM-a2' (138 aa).

A signal peptide spans 1–16 (MRTLWIVAVCLIGVEG). Intrachain disulfides connect Cys-42-Cys-131, Cys-44-Cys-60, Cys-59-Cys-111, Cys-65-Cys-138, Cys-66-Cys-104, Cys-73-Cys-97, and Cys-91-Cys-102. Ca(2+) is bound by residues Tyr-43, Gly-45, and Gly-47. His-63 is a catalytic residue. Asp-64 contributes to the Ca(2+) binding site. Asp-105 is an active-site residue.

It belongs to the phospholipase A2 family. Group II subfamily. D49 sub-subfamily. Ca(2+) serves as cofactor. As to expression, expressed by the venom gland.

The protein localises to the secreted. The catalysed reaction is a 1,2-diacyl-sn-glycero-3-phosphocholine + H2O = a 1-acyl-sn-glycero-3-phosphocholine + a fatty acid + H(+). Exhibits high hydrolytic activities and shows strong preference for the anionic micelles (dPPC with deoxycholate) to the zwitterionic micelles (dPPC with Triton X-100). PLA2 catalyzes the calcium-dependent hydrolysis of the 2-acyl groups in 3-sn-phosphoglycerides. This chain is Acidic phospholipase A2 DsM-a2/DsM-a2', found in Daboia siamensis (Eastern Russel's viper).